Reading from the N-terminus, the 377-residue chain is Pseudouridylate synthase RPUSD4, mitochondrial (377 aa).

Residues 1-46 constitute a mitochondrion transit peptide; that stretch reads MAAPCLRTPGVQLLSMSSRPGRLFTPGSWSFCSSATSSRPLNAQRL. Aspartate 153 is an active-site residue.

The protein belongs to the pseudouridine synthase RluA family. In terms of assembly, interacts with 16S mt-rRNA, mt-tRNA(Phe) and mt-tRNA(Met). Forms a regulatory protein-RNA complex, consisting of RCC1L, NGRN, RPUSD3, RPUSD4, TRUB2, FASTKD2 and 16S mt-rRNA.

It is found in the mitochondrion matrix. Its subcellular location is the nucleus. The protein resides in the cytoplasm. The catalysed reaction is uridine in 5S rRNA = pseudouridine in 5S rRNA. It carries out the reaction a uridine in tRNA = a pseudouridine in tRNA. It catalyses the reaction a uridine in mRNA = a pseudouridine in mRNA. In terms of biological role, catalyzes uridine to pseudouridine isomerization (pseudouridylation) of different mitochondrial RNA substrates. Acts on position 1397 in 16S mitochondrial ribosomal RNA (16S mt-rRNA). This modification is required for the assembly of 16S mt-rRNA into a functional mitochondrial ribosome. As a component of a functional protein-RNA module, consisting of RCC1L, NGRN, RPUSD3, RPUSD4, TRUB2, FASTKD2 and 16S mt-rRNA, controls 16S mt-rRNA abundance and is required for intra-mitochondrial translation. Acts on position 39 in mitochondrial tRNA(Phe). Also catalyzes pseudouridylation of mRNAs in nucleus: acts as a regulator of pre-mRNA splicing by mediating pseudouridylation of pre-mRNAs at locations associated with alternatively spliced regions. Pseudouridylation of pre-mRNAs near splice sites directly regulates mRNA splicing and mRNA 3'-end processing. This chain is Pseudouridylate synthase RPUSD4, mitochondrial, found in Mus musculus (Mouse).